The following is a 235-amino-acid chain: Ribonuclease HII (235 aa).

In terms of domain architecture, RNase H type-2 spans 23–212; that stretch reads GLVAGVDEAG…VAHVVSIARM (190 aa). Aspartate 29, glutamate 30, and aspartate 121 together coordinate a divalent metal cation.

The protein belongs to the RNase HII family. Mn(2+) serves as cofactor. The cofactor is Mg(2+).

It is found in the cytoplasm. The catalysed reaction is Endonucleolytic cleavage to 5'-phosphomonoester.. Endonuclease that specifically degrades the RNA of RNA-DNA hybrids. The protein is Ribonuclease HII of Delftia acidovorans (strain DSM 14801 / SPH-1).